Reading from the N-terminus, the 458-residue chain is Morphogenetic regulator of filamentous growth protein 1 (458 aa).

A disordered region spans residues 401 to 458; the sequence is KKDSGSEPLHAKRRRNSGISPRTTTLGPNGNSNTSNEELPTSDVNDINKDMTKKKMKF. A compositionally biased stretch (polar residues) spans 417–445; sequence SGISPRTTTLGPNGNSNTSNEELPTSDVN. The span at 446–458 shows a compositional bias: basic and acidic residues; sequence DINKDMTKKKMKF.

Belongs to the MFG1 family. In terms of assembly, interacts with FLO8 and MSS11, both morphogenetic transcription factors binding directly to the FLO11 promoter.

It is found in the nucleus. Transcriptional regulator with a general role in all morphogenetically distinct forms of filamentous growth, namely haploid invasive growth, biofilm formation, and diploid pseudohyphal growth. May control FLO11 gene expression as part of a promoter-bound complex with FLO8 and MSS1. The sequence is that of Morphogenetic regulator of filamentous growth protein 1 (MFG1) from Saccharomyces cerevisiae (strain ATCC 204508 / S288c) (Baker's yeast).